An 837-amino-acid polypeptide reads, in one-letter code: Semaphorin-4B (837 aa).

Positions 1-43 are cleaved as a signal peptide; the sequence is MLRTAMGLRSWLAAPWGALPPRPPLLLLLLLLLLLQPPPPTWA. Residues 44 to 717 are Extracellular-facing; that stretch reads LSPRISLPLG…WGADRSYWKE (674 aa). The 477-residue stretch at 47 to 523 folds into the Sema domain; it reads RISLPLGSEE…SHSGVVQVPM (477 aa). Asn-69 and Asn-96 each carry an N-linked (GlcNAc...) asparagine glycan. 2 cysteine pairs are disulfide-bonded: Cys-120/Cys-131 and Cys-149/Cys-158. Asn-165 carries an N-linked (GlcNAc...) asparagine glycan. 2 cysteine pairs are disulfide-bonded: Cys-286–Cys-399 and Cys-310–Cys-359. N-linked (GlcNAc...) asparagine glycosylation is found at Asn-410 and Asn-525. In terms of domain architecture, PSI spans 525 to 579; the sequence is NCSLYRSCGDCLLARDPYCAWSGSSCKHVSLYQPQLATRPWIQDIEGASAKDLCS. 2 cysteine pairs are disulfide-bonded: Cys-526–Cys-543 and Cys-611–Cys-656. Residues 604–663 form the Ig-like C2-type domain; sequence NTVNTLACPLLSNLATRLWLRNGAPVNASASCHVLPTGDLLLVGTQQLGEFQCWSLEEGF. N-linked (GlcNAc...) asparagine glycosylation occurs at Asn-630. Residues 718 to 738 form a helical membrane-spanning segment; the sequence is FLVMCTLFVLAVLLPVLFLLY. The Cytoplasmic portion of the chain corresponds to 739–837; that stretch reads RHRNSMKVFL…LGSEIRDSVV (99 aa). The tract at residues 767 to 805 is disordered; sequence PETRPLNGLGPPSTPLDHRGYQSLSDSPPGSRVFTESEK. Residues Ser-793, Ser-818, and Ser-830 each carry the phosphoserine modification.

It belongs to the semaphorin family.

Its subcellular location is the membrane. Its function is as follows. Inhibits axonal extension by providing local signals to specify territories inaccessible for growing axons. The sequence is that of Semaphorin-4B from Homo sapiens (Human).